The chain runs to 778 residues: Subtilisin-like protease SBT3.6 (778 aa).

An N-terminal signal peptide occupies residues 1 to 22 (MMNYRTSIYVVLSLVIFLNVQR). The propeptide at 23–113 (SFVAESSAKR…VIPDSFYKLA (91 aa)) is activation peptide. Positions 34–113 (VHIVYLGEKQ…VIPDSFYKLA (80 aa)) constitute an Inhibitor I9 domain. Residue Asn69 is glycosylated (N-linked (GlcNAc...) asparagine). One can recognise a Peptidase S8 domain in the interval 117 to 625 (TWDYLGLSAA…GGLVNPEKSA (509 aa)). The Charge relay system role is filled by Asp147. Asn158, Asn180, Asn202, and Asn206 each carry an N-linked (GlcNAc...) asparagine glycan. Residue His222 is the Charge relay system of the active site. N-linked (GlcNAc...) asparagine glycosylation is found at Asn237, Asn399, Asn414, and Asn541. The PA domain occupies 388 to 483 (SLVYPENPGN…ELGTDILLYT (96 aa)). Ser556 (charge relay system) is an active-site residue. N-linked (GlcNAc...) asparagine glycans are attached at residues Asn648, Asn724, and Asn759.

Belongs to the peptidase S8 family.

The protein localises to the secreted. This is Subtilisin-like protease SBT3.6 from Arabidopsis thaliana (Mouse-ear cress).